Consider the following 767-residue polypeptide: 5-methyltetrahydropteroyltriglutamate--homocysteine methyltransferase (767 aa).

Residues 17 to 20 and Lys-117 each bind 5-methyltetrahydropteroyltri-L-glutamate; that span reads RELK. L-homocysteine is bound by residues 441 to 443 and Glu-494; that span reads IGS. L-methionine contacts are provided by residues 441–443 and Glu-494; that span reads IGS. Residues 525 to 526 and Trp-571 each bind 5-methyltetrahydropteroyltri-L-glutamate; that span reads RC. Position 609 (Asp-609) interacts with L-homocysteine. Asp-609 is an L-methionine binding site. Position 615 (Glu-615) interacts with 5-methyltetrahydropteroyltri-L-glutamate. Zn(2+)-binding residues include His-652, Cys-654, and Glu-676. The active-site Proton donor is the His-705. Position 737 (Cys-737) interacts with Zn(2+).

The protein belongs to the vitamin-B12 independent methionine synthase family. It depends on Zn(2+) as a cofactor.

It catalyses the reaction 5-methyltetrahydropteroyltri-L-glutamate + L-homocysteine = tetrahydropteroyltri-L-glutamate + L-methionine. It participates in amino-acid biosynthesis; L-methionine biosynthesis via de novo pathway; L-methionine from L-homocysteine (MetE route): step 1/1. Its function is as follows. Catalyzes the transfer of a methyl group from 5-methyltetrahydrofolate to homocysteine resulting in methionine formation. The sequence is that of 5-methyltetrahydropteroyltriglutamate--homocysteine methyltransferase from Bifidobacterium longum (strain NCC 2705).